Consider the following 153-residue polypeptide: NADH dehydrogenase [ubiquinone] 1 beta subcomplex subunit 11, mitochondrial (153 aa).

Residues 1–29 (MAAGLFGLSARRLLAAAATRGLPAARVRW) constitute a mitochondrion transit peptide. The interval 40-76 (PSAVAGKRPPEPTTPWQEDPEPEDENLYEKNPDSHGY) is disordered. The segment covering 66–76 (LYEKNPDSHGY) has biased composition (basic and acidic residues). A helical membrane pass occupies residues 89–109 (LVFFFGVSIILVLGSTFVAYL).

Belongs to the complex I NDUFB11 subunit family. Complex I is composed of 45 different subunits. Interacts with BCAP31. Ubiquitous.

It localises to the mitochondrion inner membrane. Its function is as follows. Accessory subunit of the mitochondrial membrane respiratory chain NADH dehydrogenase (Complex I), that is believed not to be involved in catalysis. Complex I functions in the transfer of electrons from NADH to the respiratory chain. The immediate electron acceptor for the enzyme is believed to be ubiquinone. The chain is NADH dehydrogenase [ubiquinone] 1 beta subcomplex subunit 11, mitochondrial (NDUFB11) from Homo sapiens (Human).